Here is a 110-residue protein sequence, read N- to C-terminus: UPF0122 protein BCAH187_A3894 (110 aa).

The protein belongs to the UPF0122 family.

In terms of biological role, might take part in the signal recognition particle (SRP) pathway. This is inferred from the conservation of its genetic proximity to ftsY/ffh. May be a regulatory protein. This Bacillus cereus (strain AH187) protein is UPF0122 protein BCAH187_A3894.